We begin with the raw amino-acid sequence, 840 residues long: Probable alpha-glucuronidase A (840 aa).

The signal sequence occupies residues 1 to 19 (MWSGIPVFALLSSIGIAAA). 13 N-linked (GlcNAc...) asparagine glycosylation sites follow: asparagine 50, asparagine 149, asparagine 222, asparagine 262, asparagine 279, asparagine 310, asparagine 465, asparagine 527, asparagine 576, asparagine 610, asparagine 682, asparagine 723, and asparagine 732.

It belongs to the glycosyl hydrolase 67 family.

The protein resides in the secreted. The enzyme catalyses an alpha-D-glucuronoside + H2O = D-glucuronate + an alcohol. Alpha-glucuronidase involved in the hydrolysis of xylan, a major structural heterogeneous polysaccharide found in plant biomass representing the second most abundant polysaccharide in the biosphere, after cellulose. Releases 4-O-methylglucuronic acid from xylan. The polypeptide is Probable alpha-glucuronidase A (aguA) (Neosartorya fischeri (strain ATCC 1020 / DSM 3700 / CBS 544.65 / FGSC A1164 / JCM 1740 / NRRL 181 / WB 181) (Aspergillus fischerianus)).